The chain runs to 320 residues: Putative thiosulfate sulfurtransferase 2 (320 aa).

Rhodanese domains lie at histidine 18–serine 125 and alanine 154–proline 267. Residue cysteine 233 is the Cysteine persulfide intermediate of the active site. Position 238 (arginine 238) interacts with substrate.

It carries out the reaction thiosulfate + hydrogen cyanide = thiocyanate + sulfite + 2 H(+). In terms of biological role, may be a sulfotransferase involved in the formation of thiosulfate. The sequence is that of Putative thiosulfate sulfurtransferase 2 (cysA2) from Mycobacterium bovis (strain ATCC BAA-935 / AF2122/97).